The primary structure comprises 688 residues: Telomere length regulation protein TEL2 (688 aa).

A phosphoserine mark is found at S417 and S419.

Belongs to the TEL2 family. As to quaternary structure, component of the TTT complex composed of TEL2, TTI1 and TTI2. Interacts with TTI1 and TTI2.

The protein localises to the nucleus. The protein resides in the chromosome. It is found in the telomere. In terms of biological role, part of the TTT complex that is required to stabilize protein levels of the phosphatidylinositol 3-kinase-related protein kinase (PIKK) family proteins. Required for telomere length regulation and telomere position effect. Regulates telomere length and participates in gene silencing at subtelomeric regions. Binds to telomeric DNA repeats. The chain is Telomere length regulation protein TEL2 (TEL2) from Saccharomyces cerevisiae (strain ATCC 204508 / S288c) (Baker's yeast).